The sequence spans 223 residues: Protein FAM3D (223 aa).

An N-terminal signal peptide occupies residues 1 to 25; it reads MRVAGLIRVVVFIFTIVTMWVFLRS. 2 disulfide bridges follow: Cys54–Cys82 and Cys60–Cys217. The GG-type lectin domain maps to 62-221; it reads NNFFAFKISS…LELEGCVPRK (160 aa). A glycan (N-linked (GlcNAc...) asparagine) is linked at Asn106.

The protein belongs to the FAM3 family.

The protein resides in the secreted. This chain is Protein FAM3D, found in Mus musculus (Mouse).